The sequence spans 745 residues: Immunoglobulin superfamily containing leucine-rich repeat protein 2 (745 aa).

An N-terminal signal peptide occupies residues 1-18 (MFPLRALWLVWALLGVAG). One can recognise an LRRNT domain in the interval 19 to 51 (SCPEPCACVDKYAHQFADCAYKELREVPEGLPA). Residues 19–589 (SCPEPCACVD…VFSTKKELPS (571 aa)) lie on the Extracellular side of the membrane. Residue Asn52 is glycosylated (N-linked (GlcNAc...) asparagine). LRR repeat units lie at residues 52-73 (NVTT…AFAD), 76-97 (QVTS…ALAV), 100-123 (QLKN…RNLS), 124-145 (ALQL…ALGA), and 148-169 (DLRS…TFDA). N-linked (GlcNAc...) asparagine glycosylation occurs at Asn121. One can recognise an LRRCT domain in the interval 181 to 232 (NPFHCGCGLVWLQAWAASTRVSLPEPDSIACASPPALQGVPVYRLPALPCAP). Residues 233–371 (PSVHLSAEPP…GANSTSIRVA (139 aa)) form the Ig-like domain. Residues Cys260 and Cys355 are joined by a disulfide bond. A disordered region spans residues 287–326 (VLSGEDDGVGAEEGEGEGDGDLLTQTQAQTPTPAPAWPAP). Acidic residues predominate over residues 290 to 306 (GEDDGVGAEEGEGEGDG). Asn337 and Asn364 each carry an N-linked (GlcNAc...) asparagine glycan. The interval 375-466 (TGPPKHAPGA…QRCGNGDPSR (92 aa)) is disordered. Positions 431–449 (TETEPEEDTSEGEEAEDQI) are enriched in acidic residues. N-linked (GlcNAc...) asparagine glycosylation is found at Asn474 and Asn563. A helical transmembrane segment spans residues 590-610 (LLVIVAVSVFLLVLATVPLLG). Residues 611-745 (AACCHLLAKH…INGNYRQTAG (135 aa)) are Cytoplasmic-facing. Residues 656 to 722 (KSYPAGGEAG…FEAGSEYSDR (67 aa)) are disordered. Residues 665-683 (GGEEPEDVQGEGLDEDAEQ) are compositionally biased toward acidic residues. At Tyr719 the chain carries Phosphotyrosine. Ser720 bears the Phosphoserine mark.

As to quaternary structure, homomultimer. Interacts with NTRK1/TrkA.

It localises to the cell membrane. Functionally, required for axon extension during neural development. This Homo sapiens (Human) protein is Immunoglobulin superfamily containing leucine-rich repeat protein 2 (ISLR2).